A 423-amino-acid chain; its full sequence is Imidazolonepropionase (423 aa).

Residues H87 and H89 each coordinate Fe(3+). 2 residues coordinate Zn(2+): H87 and H89. 4-imidazolone-5-propanoate-binding residues include R96, Y159, and H192. Residue Y159 coordinates N-formimidoyl-L-glutamate. H257 serves as a coordination point for Fe(3+). H257 contacts Zn(2+). E260 is a 4-imidazolone-5-propanoate binding site. A Fe(3+)-binding site is contributed by D331. D331 contacts Zn(2+). N-formimidoyl-L-glutamate contacts are provided by N333 and G335. S336 contacts 4-imidazolone-5-propanoate.

It belongs to the metallo-dependent hydrolases superfamily. HutI family. The cofactor is Zn(2+). Fe(3+) serves as cofactor.

It localises to the cytoplasm. It catalyses the reaction 4-imidazolone-5-propanoate + H2O = N-formimidoyl-L-glutamate. It functions in the pathway amino-acid degradation; L-histidine degradation into L-glutamate; N-formimidoyl-L-glutamate from L-histidine: step 3/3. Its function is as follows. Catalyzes the hydrolytic cleavage of the carbon-nitrogen bond in imidazolone-5-propanoate to yield N-formimidoyl-L-glutamate. It is the third step in the universal histidine degradation pathway. The polypeptide is Imidazolonepropionase (Porphyromonas gingivalis (strain ATCC 33277 / DSM 20709 / CIP 103683 / JCM 12257 / NCTC 11834 / 2561)).